Consider the following 417-residue polypeptide: Lipoyl synthase, mitochondrial (417 aa).

Residues 1 to 26 (MAVCARGLRCLGTPAVSLRLAASRSY) constitute a mitochondrion transit peptide. Positions 27–61 (ATTTPPDPAIPNTPGAAATSSPAKRPRTSFQDKLN) are disordered. Positions 44–58 (ATSSPAKRPRTSFQD) are enriched in polar residues. The [4Fe-4S] cluster site is built by C134, C139, C145, C165, C169, C172, and S380. Positions 148 to 369 (GGSKSAATAT…KEKALEMGFL (222 aa)) constitute a Radical SAM core domain. The segment at 398–417 (ESTGPGSASVQDVATGDLVR) is disordered.

This sequence belongs to the radical SAM superfamily. Lipoyl synthase family. [4Fe-4S] cluster is required as a cofactor.

It localises to the mitochondrion. The enzyme catalyses [[Fe-S] cluster scaffold protein carrying a second [4Fe-4S](2+) cluster] + N(6)-octanoyl-L-lysyl-[protein] + 2 oxidized [2Fe-2S]-[ferredoxin] + 2 S-adenosyl-L-methionine + 4 H(+) = [[Fe-S] cluster scaffold protein] + N(6)-[(R)-dihydrolipoyl]-L-lysyl-[protein] + 4 Fe(3+) + 2 hydrogen sulfide + 2 5'-deoxyadenosine + 2 L-methionine + 2 reduced [2Fe-2S]-[ferredoxin]. The protein operates within protein modification; protein lipoylation via endogenous pathway; protein N(6)-(lipoyl)lysine from octanoyl-[acyl-carrier-protein]: step 2/2. In terms of biological role, catalyzes the radical-mediated insertion of two sulfur atoms into the C-6 and C-8 positions of the octanoyl moiety bound to the lipoyl domains of lipoate-dependent enzymes, thereby converting the octanoylated domains into lipoylated derivatives. This is Lipoyl synthase, mitochondrial from Uncinocarpus reesii (strain UAMH 1704).